We begin with the raw amino-acid sequence, 509 residues long: tRNA-2-methylthio-N(6)-dimethylallyladenosine synthase (509 aa).

Polar residues predominate over residues 1–13 (MNEQQRLASQQAN). Positions 1–26 (MNEQQRLASQQANSSKKKEEKDYSKY) are disordered. Basic and acidic residues predominate over residues 16-25 (KKKEEKDYSK). One can recognise an MTTase N-terminal domain in the interval 66 to 184 (RKFYIRTYGC…LPYILKDAMF (119 aa)). Residues Cys-75, Cys-111, Cys-145, Cys-221, Cys-225, and Cys-228 each coordinate [4Fe-4S] cluster. Residues 207-437 (RRGDIKAWVN…NALVNKLAIE (231 aa)) form the Radical SAM core domain. The region spanning 440-503 (NRYKGQIVEV…TWSLNGELVE (64 aa)) is the TRAM domain.

This sequence belongs to the methylthiotransferase family. MiaB subfamily. As to quaternary structure, monomer. It depends on [4Fe-4S] cluster as a cofactor.

The protein resides in the cytoplasm. The enzyme catalyses N(6)-dimethylallyladenosine(37) in tRNA + (sulfur carrier)-SH + AH2 + 2 S-adenosyl-L-methionine = 2-methylsulfanyl-N(6)-dimethylallyladenosine(37) in tRNA + (sulfur carrier)-H + 5'-deoxyadenosine + L-methionine + A + S-adenosyl-L-homocysteine + 2 H(+). In terms of biological role, catalyzes the methylthiolation of N6-(dimethylallyl)adenosine (i(6)A), leading to the formation of 2-methylthio-N6-(dimethylallyl)adenosine (ms(2)i(6)A) at position 37 in tRNAs that read codons beginning with uridine. This is tRNA-2-methylthio-N(6)-dimethylallyladenosine synthase from Bacillus cereus (strain ATCC 10987 / NRS 248).